An 87-amino-acid chain; its full sequence is Small ribosomal subunit protein bS20 (87 aa).

The interval 1–22 is disordered; sequence MANTSQARKRARQAGVRRVRNA. Residues 7-20 show a composition bias toward basic residues; that stretch reads ARKRARQAGVRRVR.

This sequence belongs to the bacterial ribosomal protein bS20 family.

In terms of biological role, binds directly to 16S ribosomal RNA. The chain is Small ribosomal subunit protein bS20 from Nitrosococcus oceani (strain ATCC 19707 / BCRC 17464 / JCM 30415 / NCIMB 11848 / C-107).